The following is a 452-amino-acid chain: NADH-cytochrome b5 reductase-like protein alnC (452 aa).

Residues 4-80 form the Cytochrome b5 heme-binding domain; that stretch reads PASITLAEVA…LKTLLVGSLQ (77 aa). An FMN-binding site is contributed by 33–38; sequence AEYRED. Heme contacts are provided by His-39 and His-63. FMN is bound by residues 80–83 and 116–125; these read QSKT and NDTSKYGQLP. 2 helical membrane-spanning segments follow: residues 120–140 and 166–186; these read KYGQ…FFTL and VGFL…ATFV. Positions 225-324 constitute an FAD-binding FR-type domain; the sequence is NTQQFLTLVD…RGPFGRYSPS (100 aa). 302 to 305 contributes to the FAD binding site; the sequence is YLLN. NADP(+) contacts are provided by residues 389–390 and 395–399; these read GQ and WKGLR.

It belongs to the flavoprotein pyridine nucleotide cytochrome reductase family. It depends on FAD as a cofactor. Requires FMN as cofactor.

The protein localises to the membrane. Its pathway is polyketide biosynthesis. In terms of biological role, NADH-cytochrome b5 reductase-like protein; part of the gene cluster that mediates the biosynthesis of asperlin, a polyketide showing anti-inflammatory, antitumor and antibiotic activities. The first step of the asperlin biosynthesis is the production of the intermediate 2,4,6-octatrienoic acid by the highly redusing polyketide synthase alnA with cleavage of the PKS product by the esterase alnB. 2,4,6-octatrienoic acid is further converted to asperlin via several steps involving the remaining enzymes from the cluster. The sequence is that of NADH-cytochrome b5 reductase-like protein alnC from Emericella nidulans (strain FGSC A4 / ATCC 38163 / CBS 112.46 / NRRL 194 / M139) (Aspergillus nidulans).